The sequence spans 886 residues: Kinesin-like protein KIF18A (886 aa).

Residues 11-355 (RMKVVVRVRP…LKYANRAKEI (345 aa)) enclose the Kinesin motor domain. A Glycyl lysine isopeptide (Lys-Gly) (interchain with G-Cter in SUMO2) cross-link involves residue Lys-24. Residue 113 to 120 (GATGSGKT) participates in ATP binding. Positions 370 to 404 (ISQYVKICNMQKAEILMLKEKLKAYEEQKALSDRN) form a coiled coil. The residue at position 674 (Ser-674) is a Phosphoserine. Lys-683 is covalently cross-linked (Glycyl lysine isopeptide (Lys-Gly) (interchain with G-Cter in SUMO2)). Ser-695 carries the phosphoserine modification. Residues 774-804 (EQEPLASSKSSVHRIESSSFSTKDSMPESAG) form a disordered region. Lys-782 participates in a covalent cross-link: Glycyl lysine isopeptide (Lys-Gly) (interchain with G-Cter in SUMO2). Ser-826 carries the phosphoserine modification. Lys-862 is covalently cross-linked (Glycyl lysine isopeptide (Lys-Gly) (interchain with G-Cter in SUMO2)). A disordered region spans residues 862–886 (KRNTNKTNSNMLRKFRRNTSKENVQ).

It belongs to the TRAFAC class myosin-kinesin ATPase superfamily. Kinesin family. Interacts with CENPE and ESR1. Glycosylated. In terms of processing, ubiquitinated.

The protein localises to the cell projection. It localises to the ruffle. The protein resides in the cytoplasm. Its subcellular location is the nucleus. It is found in the cytoskeleton. The protein localises to the microtubule organizing center. It localises to the centrosome. In terms of biological role, microtubule-depolymerizing kinesin which plays a role in chromosome congression by reducing the amplitude of preanaphase oscillations and slowing poleward movement during anaphase, thus suppressing chromosome movements. May stabilize the CENPE-BUB1B complex at the kinetochores during early mitosis and maintains CENPE levels at kinetochores during chromosome congression. In Mus musculus (Mouse), this protein is Kinesin-like protein KIF18A (Kif18a).